The following is a 388-amino-acid chain: MGSTLPTTYKRAFFEKQDATLTLEEVQLIEPQRGEILVKVEACGVCHSDHFAQMNLMGGGFPRVPGHEVVGRVAAVGDGETYWKIGDRTGAGWHGGHDGTCGACKKGLFQMCDNEQVNGITRDGGYAEYVLIRSEAAVRIPDHVNAAKYAPMLCAGVTVFNSIRQMNIPVGETVVIQGLGGLGHLALQYANRFGYRVVALSRGAQKEEFARKLGAHVYIDTSKEDPVAALQKLGGAALIVSTAPSPELINPLIEGLGVLGKLLILSIVGGIEVHTGLLVSERRIAIHRTNSIVRSLLTNSKVGKGKSIWSWPSGHATDSEEAIAFAELQGIDCLVEEFPLEKCNEAFGRSSSTTADRERVFLADFTGLTTTAAMMDGSVRFRAVITME.

Cys-46 serves as a coordination point for Zn(2+). His-47 serves as a coordination point for NAD(+). Residues His-67, Glu-68, Cys-101, Cys-104, and Cys-112 each contribute to the Zn(2+) site. His-67 contacts substrate. NAD(+) contacts are provided by residues 198–203 (VALSRG), 295–297 (SLL), and 320–322 (EEA).

The protein belongs to the zinc-containing alcohol dehydrogenase family. The cofactor is Zn(2+).

The protein localises to the cytoplasm. It localises to the cytosol. It carries out the reaction neopatulin + NADPH + H(+) = (E)-ascladiol + NADP(+). It participates in mycotoxin biosynthesis; patulin biosynthesis. Functionally, alcohol dehydrogenase; part of the gene cluster that mediates the biosynthesis of patulin, an acetate-derived tetraketide mycotoxin produced by several fungal species that shows antimicrobial properties against several bacteria. PatD catalyzes the conversion of neopatulin into E-ascladiol. The pathway begins with the synthesis of 6-methylsalicylic acid by the polyketide synthase (PKS) patK via condensation of acetate and malonate units. The 6-methylsalicylic acid decarboxylase patG then catalyzes the decarboxylation of 6-methylsalicylic acid to yield m-cresol (also known as 3-methylphenol). These first reactions occur in the cytosol. The intermediate m-cresol is then transported into the endoplasmic reticulum where the cytochrome P450 monooxygenase patH converts it to m-hydroxybenzyl alcohol, which is further converted to gentisyl alcohol by the cytochrome P450 monooxygenase patI. The oxidoreductases patJ and patO further convert gentisyl alcohol to isoepoxydon in the vacuole. PatN catalyzes then the transformation of isoepoxydon into phyllostine. The cluster protein patF is responsible for the conversion from phyllostine to neopatulin whereas the alcohol dehydrogenase patD converts neopatulin to E-ascladiol. The steps between isoepoxydon and E-ascladiol occur in the cytosol, and E-ascladiol is probably secreted to the extracellular space by one of the cluster-specific transporters patC or patM. Finally, the secreted patulin synthase patE catalyzes the conversion of E-ascladiol to patulin. The protein is Alcohol dehydrogenase patD of Aspergillus clavatus (strain ATCC 1007 / CBS 513.65 / DSM 816 / NCTC 3887 / NRRL 1 / QM 1276 / 107).